The primary structure comprises 860 residues: Transforming growth factor-beta receptor-associated protein 1 (860 aa).

In terms of domain architecture, CNH spans Arg24–Val297. A CHCR repeat occupies Arg564–Pro728.

Belongs to the TRAP1 family. In terms of assembly, interacts with TGFBR2 and ACVR2B; in the absence of ligand stimulation. Interacts with TGFBR1, ACVRL1, BMPR1A and ACVR1B; in the absence of ligand stimulation and to a less extent. Interacts with SMAD4; the interaction seems to be mutually exclusive with the interaction of SMAD4 and phosphorylated SMAD2. May interact with ALOX5. Interacts with RAB5C. Interacts with VPS8, VPS11 and VPS16. Component of the putative class C core vacuole/endosome tethering (CORVET) complex; the core of which composed of the class C Vps proteins VPS11, VPS16, VPS18 and VPS33A, is associated with VPS8 and TGFBRAP1.

It is found in the cytoplasm. The protein resides in the early endosome. Its function is as follows. Plays a role in the TGF-beta/activin signaling pathway. It associates with inactive heteromeric TGF-beta and activin receptor complexes, mainly through the type II receptor, and is released upon activation of signaling. May recruit SMAD4 to the vicinity of the receptor complex and facilitate its interaction with receptor-regulated Smads, such as SMAD2. In terms of biological role, plays a role in vesicle-mediated protein trafficking of the endocytic membrane transport pathway. Believed to act as a component of the putative CORVET endosomal tethering complexes which is proposed to be involved in the Rab5-to-Rab7 endosome conversion probably implicating MON1A/B, and via binding SNAREs and SNARE complexes to mediate tethering and docking events during SNARE-mediated membrane fusion. The CORVET complex is proposed to function as a Rab5 effector to mediate early endosome fusion probably in specific endosome subpopulations. Functions predominantly in APPL1-containing endosomes and in degradative but not recycling trafficking of endocytosed cargo. The polypeptide is Transforming growth factor-beta receptor-associated protein 1 (TGFBRAP1) (Homo sapiens (Human)).